The following is a 752-amino-acid chain: Xanthine dehydrogenase molybdenum-binding subunit (752 aa).

Positions 206, 237, 350, and 516 each coordinate Mo-molybdopterin.

The protein belongs to the xanthine dehydrogenase family. Heterotrimer of XdhA, XdhB and XdhC. Mo-molybdopterin serves as cofactor.

The catalysed reaction is xanthine + NAD(+) + H2O = urate + NADH + H(+). It catalyses the reaction hypoxanthine + NAD(+) + H2O = xanthine + NADH + H(+). It functions in the pathway purine metabolism; hypoxanthine degradation; urate from hypoxanthine: step 1/2. The protein operates within purine metabolism; hypoxanthine degradation; urate from hypoxanthine: step 2/2. Functionally, presumed to be a dehydrogenase, but possibly an oxidase. Participates in limited purine salvage (requires aspartate) but does not support aerobic growth on purines as the sole carbon source (purine catabolism). The chain is Xanthine dehydrogenase molybdenum-binding subunit (xdhA) from Escherichia coli O157:H7.